A 95-amino-acid polypeptide reads, in one-letter code: Aspartyl/glutamyl-tRNA(Asn/Gln) amidotransferase subunit C (95 aa).

Belongs to the GatC family. In terms of assembly, heterotrimer of A, B and C subunits.

The catalysed reaction is L-glutamyl-tRNA(Gln) + L-glutamine + ATP + H2O = L-glutaminyl-tRNA(Gln) + L-glutamate + ADP + phosphate + H(+). The enzyme catalyses L-aspartyl-tRNA(Asn) + L-glutamine + ATP + H2O = L-asparaginyl-tRNA(Asn) + L-glutamate + ADP + phosphate + 2 H(+). Functionally, allows the formation of correctly charged Asn-tRNA(Asn) or Gln-tRNA(Gln) through the transamidation of misacylated Asp-tRNA(Asn) or Glu-tRNA(Gln) in organisms which lack either or both of asparaginyl-tRNA or glutaminyl-tRNA synthetases. The reaction takes place in the presence of glutamine and ATP through an activated phospho-Asp-tRNA(Asn) or phospho-Glu-tRNA(Gln). The chain is Aspartyl/glutamyl-tRNA(Asn/Gln) amidotransferase subunit C from Chlorobaculum tepidum (strain ATCC 49652 / DSM 12025 / NBRC 103806 / TLS) (Chlorobium tepidum).